The sequence spans 378 residues: MASLRKTHPLLKIANDALIDLPAPSNISIWWNSGSLLGLCLIIQILTGLFLSMHYTPDTTTAFSSVAHICRDVNYGWLIRNMHANGASFFFICIYFHIGRGLYYGSYLYKETXNVGVILLLLVMMTAFVGYVLPWGQMSFWGATVITNLLSAVPYIGNSLVQWLWGGFSVDNATLTRFFAFLFLLPFIIAAMTMIHLIFLHETGSTNPVGLNSNAEKIPFHPYYSFKDLLGFIMLLTILVSLALFSPNLLGDPDNLHPANPLVTPPHIKPEWYFLFAYAILRSIPNKLGGVLALLFSILVLLLMPILHTSKLRTLTFRPLTQFLFWLLIADVAVLTWIGGMPVEHPFIIIGQIASALYFTIFLVLFPTAGLLENKMLT.

Transmembrane regions (helical) follow at residues 33 to 53, 77 to 98, 113 to 133, and 178 to 198; these read SGSLLGLCLIIQILTGLFLSM, WLIRNMHANGASFFFICIYFHI, XNVGVILLLLVMMTAFVGYVL, and FFAFLFLLPFIIAAMTMIHLI. Positions 83 and 97 each coordinate heme b. Residue histidine 196 participates in heme b binding. Histidine 201 provides a ligand contact to a ubiquinone. 4 helical membrane-spanning segments follow: residues 226–246, 288–308, 320–340, and 347–367; these read FKDLLGFIMLLTILVSLALFS, LGGVLALLFSILVLLLMPILH, LTQFLFWLLIADVAVLTWIGG, and FIIIGQIASALYFTIFLVLFP.

It belongs to the cytochrome b family. In terms of assembly, the cytochrome bc1 complex contains 3 respiratory subunits (MT-CYB, CYC1 and UQCRFS1), 2 core proteins (UQCRC1 and UQCRC2) and probably 6 low-molecular weight proteins. It depends on heme b as a cofactor.

The protein resides in the mitochondrion inner membrane. Its function is as follows. Component of the ubiquinol-cytochrome c reductase complex (complex III or cytochrome b-c1 complex) that is part of the mitochondrial respiratory chain. The b-c1 complex mediates electron transfer from ubiquinol to cytochrome c. Contributes to the generation of a proton gradient across the mitochondrial membrane that is then used for ATP synthesis. This Nannacara anomala (Goldeneye cichlid) protein is Cytochrome b (mt-cyb).